Consider the following 353-residue polypeptide: Uroporphyrinogen decarboxylase (353 aa).

Residues 25–29 (RQAGR), D74, Y151, S206, and H325 contribute to the substrate site.

It belongs to the uroporphyrinogen decarboxylase family. Homodimer.

Its subcellular location is the cytoplasm. It carries out the reaction uroporphyrinogen III + 4 H(+) = coproporphyrinogen III + 4 CO2. The protein operates within porphyrin-containing compound metabolism; protoporphyrin-IX biosynthesis; coproporphyrinogen-III from 5-aminolevulinate: step 4/4. Catalyzes the decarboxylation of four acetate groups of uroporphyrinogen-III to yield coproporphyrinogen-III. The chain is Uroporphyrinogen decarboxylase from Chloroherpeton thalassium (strain ATCC 35110 / GB-78).